The following is a 46-amino-acid chain: U-limacoditoxin(6)-Dv61 (46 aa).

The N-terminal stretch at 1–19 (MSKLLVLLMTTALATLAQA) is a signal peptide.

The protein belongs to the limacoditoxin-6 family. Expressed by the venom secretory cell of the spine. The spine is a cuticular structure containing a single large nucleated venom-secreting cell at its base. It is an independent unit capable of producing, storing and injecting venom. On the back of D.vulnerans caterpillars, spines are grouped together by 50 to 100 to form scoli, of which there are eight in D.vulnerans.

It localises to the secreted. Functionally, probable toxin. Does not show insecticidal, antimicrobial and antiparasitic activities. Does not induce increase in intracellular calcium in mouse DRG neurons, suggesting that it does not induce pain. This is U-limacoditoxin(6)-Dv61 from Doratifera vulnerans (Mottled cup moth).